Consider the following 209-residue polypeptide: Thiamine-phosphate synthase (209 aa).

4-amino-2-methyl-5-(diphosphooxymethyl)pyrimidine-binding positions include 36–40 (QLRDK) and asparagine 68. Residues aspartate 69 and aspartate 88 each coordinate Mg(2+). Serine 107 contacts 4-amino-2-methyl-5-(diphosphooxymethyl)pyrimidine. Position 133 to 135 (133 to 135 (TNS)) interacts with 2-[(2R,5Z)-2-carboxy-4-methylthiazol-5(2H)-ylidene]ethyl phosphate. Lysine 136 is a 4-amino-2-methyl-5-(diphosphooxymethyl)pyrimidine binding site. 2-[(2R,5Z)-2-carboxy-4-methylthiazol-5(2H)-ylidene]ethyl phosphate contacts are provided by residues glycine 164 and 184 to 185 (IT).

It belongs to the thiamine-phosphate synthase family. Requires Mg(2+) as cofactor.

The enzyme catalyses 2-[(2R,5Z)-2-carboxy-4-methylthiazol-5(2H)-ylidene]ethyl phosphate + 4-amino-2-methyl-5-(diphosphooxymethyl)pyrimidine + 2 H(+) = thiamine phosphate + CO2 + diphosphate. The catalysed reaction is 2-(2-carboxy-4-methylthiazol-5-yl)ethyl phosphate + 4-amino-2-methyl-5-(diphosphooxymethyl)pyrimidine + 2 H(+) = thiamine phosphate + CO2 + diphosphate. It catalyses the reaction 4-methyl-5-(2-phosphooxyethyl)-thiazole + 4-amino-2-methyl-5-(diphosphooxymethyl)pyrimidine + H(+) = thiamine phosphate + diphosphate. The protein operates within cofactor biosynthesis; thiamine diphosphate biosynthesis; thiamine phosphate from 4-amino-2-methyl-5-diphosphomethylpyrimidine and 4-methyl-5-(2-phosphoethyl)-thiazole: step 1/1. In terms of biological role, condenses 4-methyl-5-(beta-hydroxyethyl)thiazole monophosphate (THZ-P) and 2-methyl-4-amino-5-hydroxymethyl pyrimidine pyrophosphate (HMP-PP) to form thiamine monophosphate (TMP). This Shouchella clausii (strain KSM-K16) (Alkalihalobacillus clausii) protein is Thiamine-phosphate synthase.